A 139-amino-acid polypeptide reads, in one-letter code: Bilirubin-inducible fluorescent protein UnaG (139 aa).

Residues Asn57, Thr61, Ser80, Arg112, and 132 to 134 (RSY) contribute to the (4Z,15Z)-bilirubin IXalpha site.

It belongs to the calycin superfamily. Fatty-acid binding protein (FABP) family. As to quaternary structure, monomer. Detected in small-diameter muscle fibers from the white muscle layer from juvenile animals (glass eels) (at protein level). Detected in small-diameter muscle fibers from juvenile animals (glass eels).

It localises to the cytoplasm. In terms of biological role, beta-barrel protein that binds unconjugated bilirubin with high affinity. Excitation of the bilirubin-bound protein gives rise to green fluorescence, both under normoxia and hypoxia. The apoprotein is not fluorescent. Does not emit fluorescence in the presence of ditauro-bilirubin, urobilin or biliverdin. In Anguilla japonica (Japanese eel), this protein is Bilirubin-inducible fluorescent protein UnaG.